A 274-amino-acid polypeptide reads, in one-letter code: Elongation factor Ts (274 aa).

The tract at residues 82 to 85 (TDFV) is involved in Mg(2+) ion dislocation from EF-Tu.

This sequence belongs to the EF-Ts family.

The protein localises to the cytoplasm. In terms of biological role, associates with the EF-Tu.GDP complex and induces the exchange of GDP to GTP. It remains bound to the aminoacyl-tRNA.EF-Tu.GTP complex up to the GTP hydrolysis stage on the ribosome. The chain is Elongation factor Ts from Christiangramia forsetii (strain DSM 17595 / CGMCC 1.15422 / KT0803) (Gramella forsetii).